Consider the following 304-residue polypeptide: CRISPR-associated endonuclease Cas1 (304 aa).

Mn(2+) contacts are provided by E148, H204, and E219.

It belongs to the CRISPR-associated endonuclease Cas1 family. Homodimer, forms a heterotetramer with a Cas2 homodimer. Mg(2+) serves as cofactor. It depends on Mn(2+) as a cofactor.

In terms of biological role, CRISPR (clustered regularly interspaced short palindromic repeat), is an adaptive immune system that provides protection against mobile genetic elements (viruses, transposable elements and conjugative plasmids). CRISPR clusters contain spacers, sequences complementary to antecedent mobile elements, and target invading nucleic acids. CRISPR clusters are transcribed and processed into CRISPR RNA (crRNA). Acts as a dsDNA endonuclease. Involved in the integration of spacer DNA into the CRISPR cassette. The sequence is that of CRISPR-associated endonuclease Cas1 from Neisseria meningitidis serogroup C (strain 8013).